The sequence spans 144 residues: Augurin-B (144 aa).

Residues 1–18 form the signal peptide; the sequence is MSLHSLCVPTILLISVLS. Residues 19–68 constitute a propeptide that is removed on maturation; the sequence is ICLSSGGSSDSKLHRILIKRDAKEIESRPKAYISVQQSKAKEFLSGLHRT. Residues 109–144 are disordered; that stretch reads RSNDQGRQHHHDENAPMSQQDPRYNRHGANVNYDYY. Basic and acidic residues predominate over residues 112–122; the sequence is DQGRQHHHDEN.

The protein belongs to the augurin family.

The protein localises to the secreted. It is found in the cytoplasm. The protein resides in the apical cell membrane. Its function is as follows. Probable hormone. Required for the proper formation of the central nervous system by attenuating cell proliferation during development. This chain is Augurin-B, found in Danio rerio (Zebrafish).